The sequence spans 426 residues: Enolase (426 aa).

Gln163 is a binding site for (2R)-2-phosphoglycerate. Glu205 serves as the catalytic Proton donor. Mg(2+)-binding residues include Asp242, Glu283, and Asp310. (2R)-2-phosphoglycerate is bound by residues Lys335, Arg364, Ser365, and Lys386. Lys335 functions as the Proton acceptor in the catalytic mechanism.

This sequence belongs to the enolase family. Mg(2+) is required as a cofactor.

It is found in the cytoplasm. The protein resides in the secreted. The protein localises to the cell surface. The enzyme catalyses (2R)-2-phosphoglycerate = phosphoenolpyruvate + H2O. The protein operates within carbohydrate degradation; glycolysis; pyruvate from D-glyceraldehyde 3-phosphate: step 4/5. Catalyzes the reversible conversion of 2-phosphoglycerate (2-PG) into phosphoenolpyruvate (PEP). It is essential for the degradation of carbohydrates via glycolysis. The chain is Enolase from Leifsonia xyli subsp. xyli (strain CTCB07).